The sequence spans 157 residues: Large ribosomal subunit protein bL34c (157 aa).

A chloroplast-targeting transit peptide spans 1-97 (MASLSTSVVA…GQRRRGLVVR (97 aa)).

It belongs to the bacterial ribosomal protein bL34 family. Part of the 50S ribosomal subunit.

Its subcellular location is the plastid. The protein resides in the chloroplast. This protein binds directly to 23S ribosomal RNA. This is Large ribosomal subunit protein bL34c (RPL34) from Arabidopsis thaliana (Mouse-ear cress).